We begin with the raw amino-acid sequence, 154 residues long: Aspartate carbamoyltransferase regulatory chain (154 aa).

Positions 109, 114, 138, and 141 each coordinate Zn(2+).

Belongs to the PyrI family. In terms of assembly, contains catalytic and regulatory chains. Zn(2+) is required as a cofactor.

Involved in allosteric regulation of aspartate carbamoyltransferase. The protein is Aspartate carbamoyltransferase regulatory chain of Yersinia pseudotuberculosis serotype O:1b (strain IP 31758).